The chain runs to 136 residues: Large ribosomal subunit protein uL16 (136 aa).

This sequence belongs to the universal ribosomal protein uL16 family. As to quaternary structure, part of the 50S ribosomal subunit.

In terms of biological role, binds 23S rRNA and is also seen to make contacts with the A and possibly P site tRNAs. The protein is Large ribosomal subunit protein uL16 of Ehrlichia chaffeensis (strain ATCC CRL-10679 / Arkansas).